Consider the following 173-residue polypeptide: Photosystem I assembly protein Ycf3 (173 aa).

TPR repeat units lie at residues 35–68, 72–105, and 120–153; these read AYVY…EDNP, GETL…NSNQ, and GRIA…NPGG.

The protein belongs to the Ycf3 family.

Its subcellular location is the cellular thylakoid membrane. Functionally, essential for the assembly of the photosystem I (PSI) complex. May act as a chaperone-like factor to guide the assembly of the PSI subunits. The polypeptide is Photosystem I assembly protein Ycf3 (Parasynechococcus marenigrum (strain WH8102)).